Consider the following 984-residue polypeptide: Serine/threonine-protein kinase N2 (984 aa).

Residue S21 is modified to Phosphoserine. Residues 33–109 enclose the REM-1 1 domain; that stretch reads KLDFSDTMVQ…LQELNAHIVV (77 aa). An N6-acetyllysine modification is found at K77. Phosphoserine is present on S110. The segment at 114–133 is disordered; sequence DITDCPRTPDTPNNDPRCST. Phosphothreonine is present on residues T121 and T124. 2 consecutive REM-1 domains span residues 121–203 and 204–284; these read TPDT…TNEL and AFDN…EVPK. Residues 123 to 133 are compositionally biased toward polar residues; sequence DTPNNDPRCST. S302, S306, S360, and S362 each carry phosphoserine. Residues 351 to 383 are disordered; that stretch reads ATSVALPGWSPSETRSSFMSRTSKSKSGSSRNL. Positions 353 to 473 constitute a C2 domain; that stretch reads SVALPGWSPS…LYLEPQGTLF (121 aa). Over residues 364 to 381 the composition is skewed to low complexity; that stretch reads TRSSFMSRTSKSKSGSSR. The segment at 382–463 is necessary to rescue apical junction formation; it reads NLLKTDDLSN…FLDNQRHGMC (82 aa). S535, S583, and S620 each carry phosphoserine. The interval 558 to 584 is disordered; the sequence is ASDSTVTKLDFDLEPEPPPAPPRASSL. T628 bears the Phosphothreonine mark. Phosphoserine is present on S631. A Protein kinase domain is found at 657–916; it reads FRCCAVLGRG…AEDVKKHPFF (260 aa). Residues 663–671 and K686 contribute to the ATP site; that span reads LGRGHFGKV. D782 serves as the catalytic Proton acceptor. T816 is modified (phosphothreonine; by PDPK1). A necessary for the catalytic activity region spans residues 917–977; the sequence is RLIDWSALMD…EEEQEMFRDF (61 aa). Residues 917 to 984 enclose the AGC-kinase C-terminal domain; sequence RLIDWSALMD…RDFDYIADWC (68 aa). S952 is modified (phosphoserine). Phosphothreonine is present on T958. A negatively regulates the responsiveness of the catalytic activity by cardiolipin and is required for optimal activation by the GTP-bound RhoA region spans residues 978–984; the sequence is DYIADWC.

This sequence belongs to the protein kinase superfamily. AGC Ser/Thr protein kinase family. PKC subfamily. In terms of assembly, interacts (via the REM repeats) with RHOA (GTP-bound form preferentially) and interacts (via the REM repeats) with RAC1 (GTP-bound form preferentially); the interactions induce its autophosphorylation. Interacts with RHOC. Interacts with NCK1 and NCK2. Interacts with NCK1 (via SH3 domains). Interacts with CD44. Interacts (via C-terminal kinase domain) with PDPK1; the interaction stimulates PDPK1 kinase activity. Interacts with MAP3K2; the interaction activates PRK2 kinase activity in a MAP3K2-independent kinase activity. Interacts (via C-terminal domain) with AKT1; the interaction occurs with the C-terminal cleavage product of PRK2 in apoptotic cells. Interacts (via C-terminus) with PTPN13 (via PDZ 3 domain). Interacts with CDK10. As to quaternary structure, (Microbial infection) Interacts with HCV NS5B (via N-terminal finger domain). Post-translationally, autophosphorylated. Phosphorylated during mitosis. Phosphorylated by CDK10. In terms of processing, activated by limited proteolysis with trypsin. Proteolytically cleaved by caspase-3 during the induction of apoptotic cell death. In terms of tissue distribution, ubiquitous. Expressed in numerous tumor cell lines, especially in bladder tumor cells.

The protein resides in the cytoplasm. It localises to the nucleus. The protein localises to the membrane. It is found in the cell projection. Its subcellular location is the lamellipodium. The protein resides in the cytoskeleton. It localises to the cleavage furrow. The protein localises to the midbody. It is found in the cell junction. The enzyme catalyses L-seryl-[protein] + ATP = O-phospho-L-seryl-[protein] + ADP + H(+). It catalyses the reaction L-threonyl-[protein] + ATP = O-phospho-L-threonyl-[protein] + ADP + H(+). With respect to regulation, kinase activity is activated upon binding to GTP-bound Rhoa/Rac1 GTPases. Activated by caspase-3 (CASP3) cleavage during apoptosis. Activated by lipids, particularly cardiolipin and to a lesser extent by other acidic phospholipids and unsaturated fatty acids. Two specific sites, Thr-816 (activation loop of the kinase domain) and Thr-958 (turn motif), need to be phosphorylated for its full activation. PKC-related serine/threonine-protein kinase and Rho/Rac effector protein that participates in specific signal transduction responses in the cell. Plays a role in the regulation of cell cycle progression, actin cytoskeleton assembly, cell migration, cell adhesion, tumor cell invasion and transcription activation signaling processes. Phosphorylates CTTN in hyaluronan-induced astrocytes and hence decreases CTTN ability to associate with filamentous actin. Phosphorylates HDAC5, therefore lead to impair HDAC5 import. Direct RhoA target required for the regulation of the maturation of primordial junctions into apical junction formation in bronchial epithelial cells. Required for G2/M phases of the cell cycle progression and abscission during cytokinesis in a ECT2-dependent manner. Stimulates FYN kinase activity that is required for establishment of skin cell-cell adhesion during keratinocytes differentiation. Regulates epithelial bladder cells speed and direction of movement during cell migration and tumor cell invasion. Inhibits Akt pro-survival-induced kinase activity. Mediates Rho protein-induced transcriptional activation via the c-fos serum response factor (SRF). Involved in the negative regulation of ciliogenesis. In terms of biological role, (Microbial infection) Phosphorylates HCV NS5B leading to stimulation of HCV RNA replication. The sequence is that of Serine/threonine-protein kinase N2 (PKN2) from Homo sapiens (Human).